Here is a 214-residue protein sequence, read N- to C-terminus: Thymidylate kinase (214 aa).

9 to 16 (GIEGCGKT) is a binding site for ATP.

The protein belongs to the thymidylate kinase family.

It carries out the reaction dTMP + ATP = dTDP + ADP. In terms of biological role, phosphorylation of dTMP to form dTDP in both de novo and salvage pathways of dTTP synthesis. The sequence is that of Thymidylate kinase from Geotalea daltonii (strain DSM 22248 / JCM 15807 / FRC-32) (Geobacter daltonii).